Reading from the N-terminus, the 599-residue chain is MCYAVGGCAGAGPAATYVAAALQFFAASQCLLQESYPRQAHVTNGSRYDFIVVGGGTAGSALAARLAEENRFSVLLLEAGPNPPEESIVPGLRQTLKETPYDWNFTTIDDGVTSQALASHVQRQPRGKMLGGSGSLNDMVYARGHPEDYYEWADIAGDVWNWTNVLDYFKRTEHMTDSNIIRNKELMQYHGIGGAIEVSGAHYPDSPNSKLMQAFQELGFAAVDDMTYPYKIGVGKFSHTIRGGRRDSSLTAMLNKVKSGKLHVLKNTFATKILFEGNKAVGIQADSDGRNLFVYAKHEVIVSAGTFNTPKLLLLSGVGPSDILNQFDIDVVQDLPVGQGLQDHVMVLNFMTAERGTCKLSESDGYFNVIKYLYNGSGTLSYSDSIGAYLPQKDKEAHVPYFAIYPSCVPAGQLTSNLCVQGIGFTSEICEKLQKENEMHELIVAAVVLLKPQSRGHVTLKSLNPDDDPAIYSGTFDHEADMEGFPEAIEKAISLVNTTHFKKLGARVVDLTPESCRGLQEPQRTRCSVRALALAAWHAVGTARLGAVLDAELRVRGLEGLRVADASVMPTMVRGNTNAPVVMIAEMAADFIKNQYRDK.

FAD contacts are provided by residues 137 to 140 and 537 to 538; these read NDMV and WH. His-538 serves as the catalytic Proton acceptor.

The protein belongs to the GMC oxidoreductase family. It depends on FAD as a cofactor.

The enzyme catalyses ecdysone + O2 = 3-dehydroecdysone + H2O2. Functionally, involved in the inactivation of ecdysteroid molting hormones by converting ecdysteroids into 3-dehydroecdysteroids. The sequence is that of Ecdysone oxidase from Spodoptera littoralis (Egyptian cotton leafworm).